A 281-amino-acid polypeptide reads, in one-letter code: Probable superoxide dismutase [Fe] (281 aa).

Fe cation is bound by residues His-104, His-152, Asp-236, and His-240.

This sequence belongs to the iron/manganese superoxide dismutase family. Requires Fe cation as cofactor.

The catalysed reaction is 2 superoxide + 2 H(+) = H2O2 + O2. Functionally, destroys superoxide anion radicals which are normally produced within the cells and which are toxic to biological systems. The sequence is that of Probable superoxide dismutase [Fe] (sodF) from Bacillus subtilis (strain 168).